A 391-amino-acid polypeptide reads, in one-letter code: MKFIDEALIRVEAGDGGNGCVSFRREKYIPKGGPDGGDGGDGGDVYLIADENLNTLIDYRFEKRYAAGRGENGRSAGCTGHRGNDITLRVPVGTRAIDNDTQEVIGDLTKHGMKMLVAKGGYHGLGNTRFKSSVNRAPRQKTNGTPGEKRDLLLELMLLADVGMLGLPNAGKSTFIRAVSAAKPKVADYPFTTLVPSLGVARVGADRSFVVADIPGLIEGAADGAGLGIRFLKHLERCRVLIHLVDIMPIDESDPAQNISVIESELYQYSEKLSEKPTWLVFNKIDTIGEEEAQARAQEIAEQIGWEGDYYLISAATGQNVQNLTRDIMDFIEANPREVAEENTEADEVKFKWDDYHQQAMQNPIEEDWDNFDDDWSEEDEEGVEFVYTRS.

Positions 1 to 159 constitute an Obg domain; it reads MKFIDEALIR…RDLLLELMLL (159 aa). The OBG-type G domain occupies 160–333; it reads ADVGMLGLPN…LTRDIMDFIE (174 aa). GTP is bound by residues 166–173, 191–195, 213–216, 283–286, and 314–316; these read GLPNAGKS, FTTLV, DIPG, NKID, and SAA. Residues serine 173 and threonine 193 each coordinate Mg(2+).

This sequence belongs to the TRAFAC class OBG-HflX-like GTPase superfamily. OBG GTPase family. Monomer. Mg(2+) is required as a cofactor.

It is found in the cytoplasm. Functionally, an essential GTPase which binds GTP, GDP and possibly (p)ppGpp with moderate affinity, with high nucleotide exchange rates and a fairly low GTP hydrolysis rate. Plays a role in control of the cell cycle, stress response, ribosome biogenesis and in those bacteria that undergo differentiation, in morphogenesis control. In Actinobacillus pleuropneumoniae serotype 5b (strain L20), this protein is GTPase Obg.